Reading from the N-terminus, the 229-residue chain is C-&gt;U-editing enzyme APOBEC-1 (229 aa).

The CMP/dCMP-type deaminase domain occupies valine 10–leucine 134. Zn(2+) is bound at residue histidine 61. The Proton donor role is filled by glutamate 63. Zn(2+)-binding residues include cysteine 93 and cysteine 96.

The protein belongs to the cytidine and deoxycytidylate deaminase family. As to quaternary structure, homodimer. Interacts with A1CF; form an mRNA editing complex. Interacts with RBM47; form an mRNA editing complex. Found in a complex with CELF2/CUGBP2 and A1CF. Interacts with HNRPAB. Interacts with SYNCRIP. The cofactor is Zn(2+). In terms of tissue distribution, expressed in the spleen. Expressed at lower level in the kidney, testis, lung, brain and liver.

The protein localises to the cytoplasm. It is found in the nucleus. The enzyme catalyses a cytidine in mRNA + H2O + H(+) = a uridine in mRNA + NH4(+). The catalysed reaction is cytidine(6666) in apoB mRNA + H2O + H(+) = uridine(6666) in apoB mRNA + NH4(+). Functionally, cytidine deaminase catalyzing the cytidine to uridine postranscriptional editing of a variety of mRNAs. Form complexes with cofactors that confer differential editing activity and selectivity. Responsible for the postranscriptional editing of a CAA codon for Gln to a UAA codon for stop in the apolipoprotein B mRNA. Also involved in CGA (Arg) to UGA (Stop) editing in the NF1 mRNA. May also play a role in the epigenetic regulation of gene expression by participating in DNA demethylation. This is C-&gt;U-editing enzyme APOBEC-1 from Mus musculus (Mouse).